Consider the following 527-residue polypeptide: DNA polymerase epsilon subunit 2 (527 aa).

Belongs to the DNA polymerase epsilon subunit B family. Component of the DNA polymerase epsilon complex consisting of four subunits: the catalytic subunit POLE and the accessory subunits POLE2, POLE3 and POLE4.

The protein resides in the nucleus. Its function is as follows. Accessory component of the DNA polymerase epsilon complex. Participates in DNA repair and in chromosomal DNA replication. The sequence is that of DNA polymerase epsilon subunit 2 (Pole2) from Mus musculus (Mouse).